We begin with the raw amino-acid sequence, 82 residues long: Sigma-G-dependent sporulation-specific SASP protein (82 aa).

In Bacillus subtilis (strain 168), this protein is Sigma-G-dependent sporulation-specific SASP protein.